A 107-amino-acid polypeptide reads, in one-letter code: U1-lycotoxin-Ls1h (107 aa).

Positions 1–20 (MMKVLVVVALLVTLISYSSS) are cleaved as a signal peptide. The propeptide occupies 21–41 (EGIDDLEADELLSLMANEQTR). 3 disulfide bridges follow: cysteine 44-cysteine 59, cysteine 51-cysteine 68, and cysteine 70-cysteine 84.

Belongs to the neurotoxin 19 (CSTX) family. 04 (U1-Lctx) subfamily. In terms of tissue distribution, expressed by the venom gland.

The protein localises to the secreted. The polypeptide is U1-lycotoxin-Ls1h (Lycosa singoriensis (Wolf spider)).